A 63-amino-acid polypeptide reads, in one-letter code: Large ribosomal subunit protein bL28 (63 aa).

Belongs to the bacterial ribosomal protein bL28 family.

The chain is Large ribosomal subunit protein bL28 from Clostridium perfringens (strain SM101 / Type A).